We begin with the raw amino-acid sequence, 422 residues long: PHAF1 protein T01G9.2 (422 aa).

Belongs to the PHAF1 family.

It localises to the cytoplasm. The protein localises to the preautophagosomal structure. In terms of biological role, may play a regulatory role in autophagic activity. This chain is PHAF1 protein T01G9.2, found in Caenorhabditis elegans.